We begin with the raw amino-acid sequence, 471 residues long: MITPIIMAGGNGSRLWPLSRTLYPKQFLCLDGSQSMLQTTITRINNLNASDPIVICNEQHRFIVAEQLKELSKSSGDIILEPVGRNTAPAVALAALKCLKKNALLLVLAADHIIKDEETFCKTIQDARKYAEAGKLVTFGIVPTMPETGYGYIRRGQALFSAENDCSLAFRVAEFVEKPNLETAQSYLDSGEYYWNSGMFLFRADRYIEELKIRPDIYKACSLAMESAVTDLDFIRVDEDSFCACPDESIDYAVMEKTNDAVVVPLNAGWSDVGSWSSLWEISDKDSNGNVTKGDVLSHNADNCYLHAETGLVTAVGVKDLIVVQTKDAVLVANTNCVQDVKKIVEKIKLENRHEHITHREVYRPWGKYDSIDFGERYQVKRITVKPGEGISEQQHYHRAEHWIIVAGTAKITIKGEVKILTENESVYIPVGVKHCLENPGKIALELIEVRSGAYLGEDDIVRFSDKYGRN.

It belongs to the mannose-6-phosphate isomerase type 2 family.

The enzyme catalyses alpha-D-mannose 1-phosphate + GTP + H(+) = GDP-alpha-D-mannose + diphosphate. It participates in nucleotide-sugar biosynthesis; GDP-alpha-D-mannose biosynthesis; GDP-alpha-D-mannose from alpha-D-mannose 1-phosphate (GTP route): step 1/1. Functionally, involved in GDP-mannose biosynthesis which serves as the activated sugar nucleotide precursor for mannose residues in cell surface polysaccharides. This enzyme participates in synthesis of the LPS O antigen. This is Mannose-1-phosphate guanylyltransferase (manC) from Salmonella montevideo.